The chain runs to 241 residues: MEDCCMLPYYTAQSSPAMGMFNTSMGKLQRQLYKGEYTIFRYAPMFESDFIQISKRGEVIDVHNRARMVTMGIVRTSPCLTLPDVMLLARPAAVCDNARCGPATQKRESPPAEILELTRLLPLMFVKITIHNSVKKQLHLKLATGRSFYLQLCPPSDASEDLFVHWENLVYILRPPVEAYSDTRAILAGNTLDSSVLEEVQRSPVGYAMKFCEEKEQFRISRLHMNAEMFGSTYCDYTIEI.

This sequence belongs to the GARIN family.

The polypeptide is Golgi-associated RAB2 interactor protein 6 (Homo sapiens (Human)).